The sequence spans 373 residues: Bifunctional enzyme IspD/IspF (373 aa).

A 2-C-methyl-D-erythritol 4-phosphate cytidylyltransferase region spans residues 1–212 (MPDITLILLG…PCIEAPSGKT (212 aa)). A 2-C-methyl-D-erythritol 2,4-cyclodiphosphate synthase region spans residues 213-373 (LTGFGLDIHP…NLTYYNWKQK (161 aa)). The a divalent metal cation site is built by Asp-219 and His-221. Residues 219-221 (DIH) and 245-246 (HS) each bind 4-CDP-2-C-methyl-D-erythritol 2-phosphate. His-253 lines the a divalent metal cation pocket. 4-CDP-2-C-methyl-D-erythritol 2-phosphate contacts are provided by residues 267 to 269 (DIG), 272 to 276 (YPDTD), 343 to 346 (TTAE), Phe-350, and Arg-353.

This sequence in the N-terminal section; belongs to the IspD/TarI cytidylyltransferase family. IspD subfamily. It in the C-terminal section; belongs to the IspF family. A divalent metal cation serves as cofactor.

The catalysed reaction is 2-C-methyl-D-erythritol 4-phosphate + CTP + H(+) = 4-CDP-2-C-methyl-D-erythritol + diphosphate. It carries out the reaction 4-CDP-2-C-methyl-D-erythritol 2-phosphate = 2-C-methyl-D-erythritol 2,4-cyclic diphosphate + CMP. Its pathway is isoprenoid biosynthesis; isopentenyl diphosphate biosynthesis via DXP pathway; isopentenyl diphosphate from 1-deoxy-D-xylulose 5-phosphate: step 2/6. It functions in the pathway isoprenoid biosynthesis; isopentenyl diphosphate biosynthesis via DXP pathway; isopentenyl diphosphate from 1-deoxy-D-xylulose 5-phosphate: step 4/6. Functionally, bifunctional enzyme that catalyzes the formation of 4-diphosphocytidyl-2-C-methyl-D-erythritol from CTP and 2-C-methyl-D-erythritol 4-phosphate (MEP) (IspD), and catalyzes the conversion of 4-diphosphocytidyl-2-C-methyl-D-erythritol 2-phosphate (CDP-ME2P) to 2-C-methyl-D-erythritol 2,4-cyclodiphosphate (ME-CPP) with a corresponding release of cytidine 5-monophosphate (CMP) (IspF). The chain is Bifunctional enzyme IspD/IspF from Sulfurovum sp. (strain NBC37-1).